A 207-amino-acid polypeptide reads, in one-letter code: MRRSKTAAPWPGTIVPRAFFNRMATEVAPQLLNKILAAADGRAGRIVEVEAYAGALDPAAHTYRGKTPRNATMFGAPGHFYVYFTYGMHWCCNCVCGPDGAGTGVLIRALEPLHGLEQMRAARPPRTRDRDLCRGPARLTQAMGIGGAQDGVDLVGAREGFAIVDDGMAPPADLAGGPRIGIRVGQDLPWRWSVPGNRYVSGAAPRI.

The protein belongs to the DNA glycosylase MPG family.

This chain is Putative 3-methyladenine DNA glycosylase, found in Burkholderia orbicola (strain MC0-3).